The following is a 202-amino-acid chain: Probable cytochrome c oxidase subunit 3 (202 aa).

The next 5 membrane-spanning stretches (helical) occupy residues 30 to 50 (VVWL…YFTA), 69 to 89 (AVPV…GVFS), 101 to 121 (WYVI…YEYY), 141 to 161 (LATG…IFLL), and 178 to 198 (IVVS…FTVI).

It belongs to the cytochrome c oxidase subunit 3 family.

Its subcellular location is the cell membrane. The enzyme catalyses 4 Fe(II)-[cytochrome c] + O2 + 8 H(+)(in) = 4 Fe(III)-[cytochrome c] + 2 H2O + 4 H(+)(out). The polypeptide is Probable cytochrome c oxidase subunit 3 (ctaE) (Mycobacterium leprae (strain TN)).